Reading from the N-terminus, the 266-residue chain is ATG8-interacting protein 2 (266 aa).

The AIM (Atg8-family-interacting motif) signature appears at 14-17 (WEVV). Residues 191–210 (TNTVWSICIAAAVMGIVILG) traverse the membrane as a helical segment. An AIM (Atg8-family-interacting motif) motif is present at residues 218–221 (WQIL).

As to quaternary structure, interacts with ATG8F.

Its subcellular location is the endoplasmic reticulum membrane. It localises to the membrane. Functionally, may be involved in salt stress-induced vesicle-to-vacuole trafficking pathway. Through its interaction with ATG8F, may enable delivery of the vesicle bodies to the vacuole by an autophagic pathway. Plays a role in seed germination in response to exogenous abscisic acid (ABA) treatment. The protein is ATG8-interacting protein 2 of Arabidopsis thaliana (Mouse-ear cress).